The sequence spans 157 residues: Ribonuclease 8 (157 aa).

An N-terminal signal peptide occupies residues 1–30 (MAPARAGCCPLLLLLLLLLGLWVAEVLVSA). His45 (proton acceptor) is an active-site residue. 4 disulfides stabilise this stretch: Cys53–Cys96, Cys67–Cys121, Cys85–Cys136, and Cys92–Cys99. Substrate is bound by residues 68 to 72 (KDLNT) and Lys93. The active-site Proton donor is His152.

The protein belongs to the pancreatic ribonuclease family.

It is found in the secreted. Has a low ribonuclease activity. The protein is Ribonuclease 8 (RNASE8) of Pan troglodytes (Chimpanzee).